We begin with the raw amino-acid sequence, 972 residues long: DNA topoisomerase 1 (972 aa).

Disordered stretches follow at residues 1 to 210 and 300 to 416; these read MSGD…VFVK and HEQS…RQKA. The segment covering 11–31 has biased composition (polar residues); the sequence is IHIQNGGSCEVVQSNGVTTNG. The span at 32–50 shows a compositional bias: basic residues; that stretch reads HGHHHHHHSSSSSSSKHKS. Composition is skewed to basic and acidic residues over residues 51-65, 72-86, and 93-103; these read SSKD…EHKS, SKEH…DRHK, and KHRDKDKERDG. The span at 104–114 shows a compositional bias: low complexity; sequence SSNSHRSGSSS. A compositionally biased stretch (basic residues) spans 125 to 138; that stretch reads SKHKSSSGHHKRSS. Basic and acidic residues predominate over residues 139–151; that stretch reads KDKERRDKDKDRG. Positions 173–183 are enriched in low complexity; the sequence is SHKSSSSSSSS. S303 is modified (phosphoserine). At Y304 the chain carries Phosphotyrosine. The segment covering 316 to 330 has biased composition (acidic residues); the sequence is HDDDADEMNDDEEDV. Interaction with DNA regions lie at residues 648-649, 711-716, and 807-809; these read KY, RAGNEK, and TAK. The region spanning 655–972 is the Topo IB-type catalytic domain; sequence SSKLKGEKDH…VHMADENYRF (318 aa). The active-site O-(3'-phospho-DNA)-tyrosine intermediate is Y930.

This sequence belongs to the type IB topoisomerase family. As to quaternary structure, interacts with Topors.

It localises to the nucleus. It is found in the cytoplasm. The catalysed reaction is ATP-independent breakage of single-stranded DNA, followed by passage and rejoining.. In terms of biological role, releases the supercoiling and torsional tension of DNA introduced during the DNA replication and transcription by transiently cleaving and rejoining one strand of the DNA duplex. Introduces a single-strand break via transesterification at a target site in duplex DNA. The scissile phosphodiester is attacked by the catalytic tyrosine of the enzyme, resulting in the formation of a DNA-(3'-phosphotyrosyl)-enzyme intermediate and the expulsion of a 5'-OH DNA strand. The free DNA strand then undergoes passage around the unbroken strand thus removing DNA supercoils. Finally, in the religation step, the DNA 5'-OH attacks the covalent intermediate to expel the active-site tyrosine and restore the DNA phosphodiester backbone. The chain is DNA topoisomerase 1 from Drosophila melanogaster (Fruit fly).